The chain runs to 466 residues: UDP-N-acetylmuramoylalanine--D-glutamate ligase (466 aa).

ATP is bound at residue 121–127 (GTNGKST).

The protein belongs to the MurCDEF family.

Its subcellular location is the cytoplasm. The catalysed reaction is UDP-N-acetyl-alpha-D-muramoyl-L-alanine + D-glutamate + ATP = UDP-N-acetyl-alpha-D-muramoyl-L-alanyl-D-glutamate + ADP + phosphate + H(+). The protein operates within cell wall biogenesis; peptidoglycan biosynthesis. Cell wall formation. Catalyzes the addition of glutamate to the nucleotide precursor UDP-N-acetylmuramoyl-L-alanine (UMA). In Rhodopseudomonas palustris (strain HaA2), this protein is UDP-N-acetylmuramoylalanine--D-glutamate ligase.